A 547-amino-acid chain; its full sequence is Glucose-6-phosphate isomerase (547 aa).

Catalysis depends on E356, which acts as the Proton donor. Catalysis depends on residues H387 and K508.

This sequence belongs to the GPI family.

Its subcellular location is the cytoplasm. It catalyses the reaction alpha-D-glucose 6-phosphate = beta-D-fructose 6-phosphate. Its pathway is carbohydrate biosynthesis; gluconeogenesis. It participates in carbohydrate degradation; glycolysis; D-glyceraldehyde 3-phosphate and glycerone phosphate from D-glucose: step 2/4. Functionally, catalyzes the reversible isomerization of glucose-6-phosphate to fructose-6-phosphate. The sequence is that of Glucose-6-phosphate isomerase from Cupriavidus taiwanensis (strain DSM 17343 / BCRC 17206 / CCUG 44338 / CIP 107171 / LMG 19424 / R1) (Ralstonia taiwanensis (strain LMG 19424)).